A 137-amino-acid chain; its full sequence is DNA-directed RNA polymerase subunit omega (137 aa).

The interval 78-137 (DEPEPEAVPLLSSSPAAAAVAPQAASGDDNDIQFDRMSEEDLLRGLENLAPPTETEDEGD) is disordered. The span at 84–103 (AVPLLSSSPAAAAVAPQAAS) shows a compositional bias: low complexity. A compositionally biased stretch (basic and acidic residues) spans 110–121 (QFDRMSEEDLLR).

This sequence belongs to the RNA polymerase subunit omega family. As to quaternary structure, the RNAP catalytic core consists of 2 alpha, 1 beta, 1 beta' and 1 omega subunit. When a sigma factor is associated with the core the holoenzyme is formed, which can initiate transcription.

The catalysed reaction is RNA(n) + a ribonucleoside 5'-triphosphate = RNA(n+1) + diphosphate. Promotes RNA polymerase assembly. Latches the N- and C-terminal regions of the beta' subunit thereby facilitating its interaction with the beta and alpha subunits. The polypeptide is DNA-directed RNA polymerase subunit omega (Methylobacterium sp. (strain 4-46)).